The primary structure comprises 254 residues: 5'/3'-nucleotidase SurE (254 aa).

Residues Asp-9, Asp-10, Ser-40, and Asn-93 each coordinate a divalent metal cation.

This sequence belongs to the SurE nucleotidase family. Requires a divalent metal cation as cofactor.

The protein resides in the cytoplasm. The catalysed reaction is a ribonucleoside 5'-phosphate + H2O = a ribonucleoside + phosphate. It carries out the reaction a ribonucleoside 3'-phosphate + H2O = a ribonucleoside + phosphate. It catalyses the reaction [phosphate](n) + H2O = [phosphate](n-1) + phosphate + H(+). Nucleotidase with a broad substrate specificity as it can dephosphorylate various ribo- and deoxyribonucleoside 5'-monophosphates and ribonucleoside 3'-monophosphates with highest affinity to 3'-AMP. Also hydrolyzes polyphosphate (exopolyphosphatase activity) with the preference for short-chain-length substrates (P20-25). Might be involved in the regulation of dNTP and NTP pools, and in the turnover of 3'-mononucleotides produced by numerous intracellular RNases (T1, T2, and F) during the degradation of various RNAs. The sequence is that of 5'/3'-nucleotidase SurE from Yersinia pestis bv. Antiqua (strain Antiqua).